The following is a 142-amino-acid chain: Ninjurin-2 (142 aa).

Residues 1–21 (MESARENIDLQPGSSDPRSQP) form a disordered region. Topologically, residues 1–60 (MESARENIDLQPGSSDPRSQPINLNHYATKKSVAESMLDVALFMSNAMRLKAVLEQGPSS) are extracellular. Polar residues predominate over residues 12–21 (PGSSDPRSQP). A helix alpha1 region spans residues 25–37 (NHYATKKSVAESM). Residues 38 to 57 (LDVALFMSNAMRLKAVLEQG) are helix alpha2. The helical transmembrane segment at 61-92 (HYYTTLVTLISLSLLLQVVIGVLLVVIARLNL) threads the bilayer. Residues 93–96 (NEVE) lie on the Cytoplasmic side of the membrane. Residues 97–126 (KQWRLNQLNNAATILVFFTVVINVFITAFG) form a helical membrane-spanning segment. Gln-103 lines the cholesterol pocket. Residues 127 to 142 (AHKTGFLAARASRNPL) lie on the Extracellular side of the membrane.

It belongs to the ninjurin family. In terms of assembly, homooligomer; in response to stimuli, homooligomerizes into filaments. In contrast to NINJ1, the filament is curved toward the intracellular space, preventing its circularization on a relatively flat membrane to mediate plasma membrane rupture: curvature is caused by cholesterol-binding at the cytoplasmic leaflet. In terms of tissue distribution, widely expressed. In adult, higher expression in the bone marrow and peripheral blood lymphocytes, medium in the lung, lymph node, thyroid, uterus, thymus, spleen, prostate and skeletal muscle, lower in the liver, placenta, brain, heart and kidney. In embryo, higher expression in the thymus, heart and liver, lower in the spleen, lung, brain and kidney.

It localises to the cell membrane. Its role in unclear. In contrast to NINJ1 paralog, does not mediate plasma membrane rupture (cytolysis) downstream of necroptotic and pyroptotic programmed cell death. While it is able to oligomerize and form filaments, filaments are curved toward the intracellular space, preventing circularization to mediate plasma membrane rupture. May act as a homophilic transmembrane adhesion molecule involved in nerve regeneration. Promotes axonal growth. This chain is Ninjurin-2, found in Homo sapiens (Human).